The primary structure comprises 426 residues: Histidine--tRNA ligase (426 aa).

Belongs to the class-II aminoacyl-tRNA synthetase family. Homodimer.

It is found in the cytoplasm. It carries out the reaction tRNA(His) + L-histidine + ATP = L-histidyl-tRNA(His) + AMP + diphosphate + H(+). In Streptococcus pyogenes serotype M6 (strain ATCC BAA-946 / MGAS10394), this protein is Histidine--tRNA ligase.